The primary structure comprises 1176 residues: 3-hydroxy-3-methylglutaryl-coenzyme A reductase (1176 aa).

The Cytoplasmic portion of the chain corresponds to 1-34 (MSLPNHSGSSAFKSFSYIVGTGIKRAAKLSTRNP). The helical transmembrane segment at 35–55 (IEMIVVVLILSSFSYFYLFNL) threads the bilayer. Residues 56-299 (ARTSDIFSGT…VKELIDLADN (244 aa)) are Lumenal-facing. N-linked (GlcNAc...) asparagine glycosylation is found at N224 and N238. Residues 300 to 320 (IDIIVILVGYIMMIATFISLY) form a helical membrane-spanning segment. In terms of domain architecture, SSD spans 301–465 (DIIVILVGYI…FTWYTAVLAL (165 aa)). Topologically, residues 321–330 (VNMRAMGSRY) are cytoplasmic. A helical membrane pass occupies residues 331–351 (TLATAVVFNGFFSFMLALLTV). Residues 352–355 (RALG) are Lumenal-facing. The chain crosses the membrane as a helical span at residues 356-376 (VDVYPVVLAEAIPFLAVTIGF). The Cytoplasmic portion of the chain corresponds to 377–422 (ERPFKLTKRVFQFSKETPLTKQEIRTTIMRAVDTVALPIARDCFME). The helical transmembrane segment at 423 to 443 (IIVLVLGAKSGISGLEEFCLL) threads the bilayer. A topological domain (lumenal) is located at residue S444. A helical transmembrane segment spans residues 445-465 (AILLAYDFIIMFTWYTAVLAL). At 466-524 (KLELLRIREINGISADDIKKGTKKSTGYIRRTVIKAFSDDHAAGANTANQKADGPIIGR) the chain is on the cytoplasmic side. Residues 525–545 (VKLLMIVGFVVMHIFKFCSAF) traverse the membrane as a helical segment. Topologically, residues 546-622 (QSVGPQVNIT…DTYAVYIQHP (77 aa)) are lumenal. N-linked (GlcNAc...) asparagine glycosylation is found at N553 and N596. Residues 623–643 (VISKWLTIALFVSLFLNTYLF) traverse the membrane as a helical segment. The Cytoplasmic segment spans residues 644-1176 (NVAKQPKQIV…GTEPGTCIKS (533 aa)). Residues 699-724 (PNHKRSHNHHHSHSHSHNHHSNHHQS) form a disordered region. The segment covering 700 to 721 (NHKRSHNHHHSHSHSHNHHSNH) has biased composition (basic residues). Residue E841 is the Charge relay system of the active site. 847–853 (STARGCK) lines the CoA pocket. NADP(+) contacts are provided by residues 907-909 (SRF) and 934-942 (DAMGMNMIS). K972 (charge relay system) is an active-site residue. 1001 to 1003 (VLK) contributes to the CoA binding site. D1048 acts as the Charge relay system in catalysis. CoA is bound at residue 1145–1146 (AH). H1146 functions as the Proton donor in the catalytic mechanism. Residue 1150-1151 (NR) participates in NADP(+) binding. The disordered stretch occupies residues 1153-1176 (TQAPTITSGPAPSTGTEPGTCIKS).

The protein belongs to the HMG-CoA reductase family.

The protein resides in the endoplasmic reticulum membrane. It carries out the reaction (R)-mevalonate + 2 NADP(+) + CoA = (3S)-3-hydroxy-3-methylglutaryl-CoA + 2 NADPH + 2 H(+). Its pathway is metabolic intermediate biosynthesis; (R)-mevalonate biosynthesis; (R)-mevalonate from acetyl-CoA: step 3/3. In terms of biological role, HMG-CoA reductase; part of the first module of ergosterol biosynthesis pathway that includes the early steps of the pathway, conserved across all eukaryotes, and which results in the formation of mevalonate from acetyl-coenzyme A (acetyl-CoA). In this module, the cytosolic acetyl-CoA acetyltransferase catalyzes the formation of acetoacetyl-CoA. The hydroxymethylglutaryl-CoA synthase then condenses acetyl-CoA with acetoacetyl-CoA to form HMG-CoA. The rate-limiting step of the early module is the reduction to mevalonate by the 3-hydroxy-3-methylglutaryl-coenzyme A (HMG-CoA) reductase hmgA. The chain is 3-hydroxy-3-methylglutaryl-coenzyme A reductase from Phycomyces blakesleeanus (strain ATCC 8743b / DSM 1359 / FGSC 10004 / NBRC 33097 / NRRL 1555).